The following is a 265-amino-acid chain: Putative carbamate hydrolase RutD (265 aa).

In terms of domain architecture, AB hydrolase-1 spans 21–123 (PILLSAGMGG…TIVNGWARAD (103 aa)).

The protein belongs to the AB hydrolase superfamily. Hydrolase RutD family.

It carries out the reaction carbamate + 2 H(+) = NH4(+) + CO2. Functionally, involved in pyrimidine catabolism. May facilitate the hydrolysis of carbamate, a reaction that can also occur spontaneously. This is Putative carbamate hydrolase RutD from Azorhizobium caulinodans (strain ATCC 43989 / DSM 5975 / JCM 20966 / LMG 6465 / NBRC 14845 / NCIMB 13405 / ORS 571).